We begin with the raw amino-acid sequence, 174 residues long: Ribosome maturation factor RimP (174 aa).

The protein belongs to the RimP family.

The protein localises to the cytoplasm. In terms of biological role, required for maturation of 30S ribosomal subunits. The protein is Ribosome maturation factor RimP of Acinetobacter baumannii (strain AB307-0294).